A 524-amino-acid chain; its full sequence is Thioredoxin reductase 2, mitochondrial (524 aa).

The N-terminal 36 residues, 1 to 36, are a transit peptide targeting the mitochondrion; sequence MAAMAVALRGLGGRFRWRTQAVAGGVRGAARGAAAG. 41-70 contributes to the FAD binding site; the sequence is DLLVVGGGSGGLACAKEAAQLGRKVAVVDY. Residues Cys-86 and Cys-91 are joined by a disulfide bond. 2 positions are modified to N6-succinyllysine: Lys-175 and Lys-329. The Proton acceptor role is filled by His-497. A cross-link (cysteinyl-selenocysteine (Cys-Sec)) is located at residues 522–523; sequence CU. A non-standard amino acid (selenocysteine) is located at residue Sec-523.

This sequence belongs to the class-I pyridine nucleotide-disulfide oxidoreductase family. In terms of assembly, homodimer. The cofactor is FAD. In terms of tissue distribution, highly expressed in the prostate, ovary, liver, testis, uterus, colon and small intestine. Intermediate levels in brain, skeletal muscle, heart and spleen. Low levels in placenta, pancreas, thymus and peripheral blood leukocytes. According to PubMed:10608886, high levels in kidney, whereas according to PubMed:9923614, levels are low. High expression is observed in the adrenal cortex.

The protein resides in the mitochondrion. It catalyses the reaction [thioredoxin]-dithiol + NADP(+) = [thioredoxin]-disulfide + NADPH + H(+). Involved in the control of reactive oxygen species levels and the regulation of mitochondrial redox homeostasis. Maintains thioredoxin in a reduced state. May play a role in redox-regulated cell signaling. The protein is Thioredoxin reductase 2, mitochondrial of Homo sapiens (Human).